The primary structure comprises 122 residues: Large ribosomal subunit protein uL14 (122 aa).

The protein belongs to the universal ribosomal protein uL14 family. Part of the 50S ribosomal subunit. Forms a cluster with proteins L3 and L19. In the 70S ribosome, L14 and L19 interact and together make contacts with the 16S rRNA in bridges B5 and B8.

Binds to 23S rRNA. Forms part of two intersubunit bridges in the 70S ribosome. This is Large ribosomal subunit protein uL14 from Staphylococcus haemolyticus (strain JCSC1435).